We begin with the raw amino-acid sequence, 340 residues long: MSVWALFAFFSLFLSLSVRGSAEQCGRQAGDALCPGGLCCSSYGWCGTTVDYCGIGCQSQCDGGGGGDGGDDGCDGGDDGGGDGDDGYLSDIIPKSKFDALLKFRNDARCPAAGFYTYNAFISAAKEFPDFGNTGDDLMRKREIAAFLGQTSHETTGGWPDAPCGPYAWGYCYLKEINCQPYCDPSSNYQCVAGKQYCGRGPIQLSWNYNYGLCGDDLKLPLLQEPELVETDPVISFKTAIWFWMKPQSPKPSCHAVITGNWTPSAADLEAGRVPGYGVITNIINGGIECGQGGPNAANEDRIGFYKKYCDSLGTTYGSNLDCYQQRPFGYGLSGLKDTM.

Positions 1 to 22 are cleaved as a signal peptide; it reads MSVWALFAFFSLFLSLSVRGSA. Residues 23–63 form the Chitin-binding type-1 domain; it reads EQCGRQAGDALCPGGLCCSSYGWCGTTVDYCGIGCQSQCDG. Intrachain disulfides connect C25/C40, C34/C46, C39/C53, and C57/C61. Positions 64-85 are spacer; it reads GGGGDGGDDGCDGGDDGGGDGD. Residues 86–340 are chitinase; the sequence is DGYLSDIIPK…YGLSGLKDTM (255 aa). Cystine bridges form between C110–C172, C183–C191, and C290–C323. E154 acts as the Proton donor in catalysis.

It belongs to the glycosyl hydrolase 19 family. Chitinase class I subfamily.

The catalysed reaction is Random endo-hydrolysis of N-acetyl-beta-D-glucosaminide (1-&gt;4)-beta-linkages in chitin and chitodextrins.. In terms of biological role, defense against chitin-containing fungal pathogens. The chain is Acidic endochitinase WIN6 (WIN6) from Populus trichocarpa (Western balsam poplar).